We begin with the raw amino-acid sequence, 100 residues long: Large ribosomal subunit protein uL23 (100 aa).

The protein belongs to the universal ribosomal protein uL23 family. Part of the 50S ribosomal subunit. Contacts protein L29, and trigger factor when it is bound to the ribosome.

Its function is as follows. One of the early assembly proteins it binds 23S rRNA. One of the proteins that surrounds the polypeptide exit tunnel on the outside of the ribosome. Forms the main docking site for trigger factor binding to the ribosome. The chain is Large ribosomal subunit protein uL23 from Parasynechococcus marenigrum (strain WH8102).